The primary structure comprises 337 residues: Glyceraldehyde-3-phosphate dehydrogenase (337 aa).

NAD(+) contacts are provided by residues 12 to 13 (RI), aspartate 36, arginine 80, and serine 122. D-glyceraldehyde 3-phosphate-binding positions include 153–155 (SCT) and threonine 184. The Nucleophile role is filled by cysteine 154. Position 185 (asparagine 185) interacts with NAD(+). D-glyceraldehyde 3-phosphate contacts are provided by residues arginine 199, 212–213 (TG), and arginine 235. NAD(+) is bound at residue asparagine 318.

This sequence belongs to the glyceraldehyde-3-phosphate dehydrogenase family. As to quaternary structure, homotetramer.

The protein localises to the cytoplasm. The enzyme catalyses D-glyceraldehyde 3-phosphate + phosphate + NAD(+) = (2R)-3-phospho-glyceroyl phosphate + NADH + H(+). It functions in the pathway carbohydrate degradation; glycolysis; pyruvate from D-glyceraldehyde 3-phosphate: step 1/5. Functionally, catalyzes the oxidative phosphorylation of glyceraldehyde 3-phosphate (G3P) to 1,3-bisphosphoglycerate (BPG) using the cofactor NAD. The first reaction step involves the formation of a hemiacetal intermediate between G3P and a cysteine residue, and this hemiacetal intermediate is then oxidized to a thioester, with concomitant reduction of NAD to NADH. The reduced NADH is then exchanged with the second NAD, and the thioester is attacked by a nucleophilic inorganic phosphate to produce BPG. This is Glyceraldehyde-3-phosphate dehydrogenase (gap) from Zymomonas mobilis subsp. mobilis (strain ATCC 31821 / ZM4 / CP4).